The following is a 931-amino-acid chain: Probable zinc protease PqqL (931 aa).

His80 contributes to the Zn(2+) binding site. The active-site Proton acceptor is the Glu83. Positions 84 and 160 each coordinate Zn(2+).

This sequence belongs to the peptidase M16 family. The cofactor is Zn(2+).

This Escherichia coli (strain K12) protein is Probable zinc protease PqqL (pqqL).